The chain runs to 354 residues: Putative ankyrin repeat protein L284 (354 aa).

ANK repeat units follow at residues 201–230 (ILDDILTLIIKSGNVSAFKTLINIIGLSND), 253–284 (SRYPQLYLESSIINGRTDIVDNLVKKGSNPIV), and 286–314 (LHKAAECAQFDIIWNLSENSLINQNDIDI).

The chain is Putative ankyrin repeat protein L284 from Acanthamoeba polyphaga (Amoeba).